We begin with the raw amino-acid sequence, 363 residues long: Protein-glutamate methylesterase/protein-glutamine glutaminase 3 (363 aa).

The 118-residue stretch at 8–125 folds into the Response regulatory domain; the sequence is KVLCVDDSAL…RDGMLDYAEK (118 aa). At D59 the chain carries 4-aspartylphosphate. One can recognise a CheB-type methylesterase domain in the interval 164 to 356; that stretch reads LVSTEKLIII…RRVMARLATM (193 aa). Catalysis depends on residues S176, H202, and D298.

This sequence belongs to the CheB family. Post-translationally, phosphorylated by CheA. Phosphorylation of the N-terminal regulatory domain activates the methylesterase activity.

The protein resides in the cytoplasm. It carries out the reaction [protein]-L-glutamate 5-O-methyl ester + H2O = L-glutamyl-[protein] + methanol + H(+). The catalysed reaction is L-glutaminyl-[protein] + H2O = L-glutamyl-[protein] + NH4(+). In terms of biological role, involved in chemotaxis. Part of a chemotaxis signal transduction system that modulates chemotaxis in response to various stimuli. Catalyzes the demethylation of specific methylglutamate residues introduced into the chemoreceptors (methyl-accepting chemotaxis proteins or MCP) by CheR. Also mediates the irreversible deamidation of specific glutamine residues to glutamic acid. The protein is Protein-glutamate methylesterase/protein-glutamine glutaminase 3 of Burkholderia lata (strain ATCC 17760 / DSM 23089 / LMG 22485 / NCIMB 9086 / R18194 / 383).